A 341-amino-acid polypeptide reads, in one-letter code: UDP-3-O-acylglucosamine N-acyltransferase (341 aa).

The active-site Proton acceptor is His-239.

Belongs to the transferase hexapeptide repeat family. LpxD subfamily. As to quaternary structure, homotrimer.

It catalyses the reaction a UDP-3-O-[(3R)-3-hydroxyacyl]-alpha-D-glucosamine + a (3R)-hydroxyacyl-[ACP] = a UDP-2-N,3-O-bis[(3R)-3-hydroxyacyl]-alpha-D-glucosamine + holo-[ACP] + H(+). Its pathway is bacterial outer membrane biogenesis; LPS lipid A biosynthesis. Its function is as follows. Catalyzes the N-acylation of UDP-3-O-acylglucosamine using 3-hydroxyacyl-ACP as the acyl donor. Is involved in the biosynthesis of lipid A, a phosphorylated glycolipid that anchors the lipopolysaccharide to the outer membrane of the cell. This Shewanella sp. (strain MR-4) protein is UDP-3-O-acylglucosamine N-acyltransferase.